We begin with the raw amino-acid sequence, 1252 residues long: Nephrin (1252 aa).

Residues 1–35 form the signal peptide; that stretch reads MGAKRVTVRGARTSPIHRMSSLTPLLLMGMLTSGL. The Extracellular segment spans residues 36–1078; sequence AESPVPTSAP…PGPPRLPLLP (1043 aa). Ig-like C2-type domains lie at 39–144, 149–247, 256–347, 354–448, 454–554, and 558–649; these read PVPT…VILS, PKVL…ASFT, PPVI…RSIT, PSAI…KSLT, PAQK…TQLV, and PPTN…ETVS. A glycan (N-linked (GlcNAc...) asparagine) is linked at N54. 3 disulfides stabilise this stretch: C67/C125, C174/C231, and C279/C331. N370 carries an N-linked (GlcNAc...) asparagine glycan. Cysteines 375 and 431 form a disulfide. A Phosphoserine modification is found at S446. Cysteines 479 and 542 form a disulfide. N-linked (GlcNAc...) asparagine glycans are attached at residues N561, N578, N591, and N722. Cysteines 581 and 637 form a disulfide. Ig-like C2-type domains are found at residues 754–846 and 852–953; these read PTIR…LVRL and PQVD…VSIS. Cystine bridges form between C775–C830 and C877–C934. Residues 957-1052 form the Fibronectin type-III domain; it reads PPLGLKVVSI…IQVSVTTPGP (96 aa). The disordered stretch occupies residues 1043 to 1067; that stretch reads IQVSVTTPGPDQAPEDTDHQLPTEL. The helical transmembrane segment at 1079 to 1099 threads the bilayer; the sequence is VLFAVGGLLLLSNASCVGGLL. Residues 1100 to 1252 are Cytoplasmic-facing; it reads WRRRLRRLAE…LPFELRGHLV (153 aa). At S1112 the chain carries Phosphoserine. A compositionally biased stretch (basic and acidic residues) spans 1113–1127; sequence EKTEAGSEDRIRNEY. The interval 1113–1144 is disordered; it reads EKTEAGSEDRIRNEYEESQWTGDRDTRSSTVS. T1115 carries the post-translational modification Phosphothreonine. The residue at position 1119 (S1119) is a Phosphoserine. Position 1204 is a phosphotyrosine; by FYN (Y1204).

Belongs to the immunoglobulin superfamily. Interacts with NPHS2 and with CD2AP (via C-terminal domain). Self-associates (via the Ig-like domains). Also interacts (via the Ig-like domains) with KIRREL1/NEPH1 and KIRREL2; the interaction with KIRREL1 is dependent on KIRREL1 glycosylation. Interacts with KIRREL3. Interacts with MAGI1 (via PDZ 2 and 3 domains) forming a tripartite complex with IGSF5/JAM4. Interacts with DDN; the interaction is direct. Forms a complex with ACTN4, CASK, IQGAP1, MAGI2, SPTAN1 and SPTBN1. Interacts with phosphatidylinositol 3-kinase regulatory subunit PIK3R1; the interaction is reduced by high glucose levels. In terms of processing, phosphorylated at Tyr-1204 by FYN, leading to the recruitment and activation of phospholipase C-gamma-1/PLCG1. Tyrosine phosphorylation is reduced by high glucose levels. Dephosphorylated by tensin TNS2 which leads to reduced binding of NPHN1 to PIK3R1. In terms of tissue distribution, strongly expressed in the podocytes of kidney glomeruli (at protein level) and at lower levels in the spleen.

It localises to the cell membrane. Functionally, seems to play a role in the development or function of the kidney glomerular filtration barrier. Regulates glomerular vascular permeability. May anchor the podocyte slit diaphragm to the actin cytoskeleton. Plays a role in skeletal muscle formation through regulation of myoblast fusion. This chain is Nephrin (Nphs1), found in Rattus norvegicus (Rat).